Here is a 397-residue protein sequence, read N- to C-terminus: Protein Mx1 (397 aa).

Belongs to the TRAFAC class dynamin-like GTPase superfamily. Dynamin/Fzo/YdjA family.

This chain is Protein Mx1 (Mx1), found in Mus musculus (Mouse).